The sequence spans 118 residues: Superoxide-generating NADPH oxidase light chain subunit (118 aa).

Transmembrane regions (helical) follow at residues 9–29, 36–56, 62–82, and 83–103; these read WAAM…IMGI, IAIY…PLSF, AIFH…VLCY, and FLVP…VFLI.

It belongs to the p22phox family. In terms of assembly, composed of a heavy chain and a light chain.

It is found in the cell membrane. Its function is as follows. Critical component of the membrane-bound oxidase of phagocytes that generates superoxide. The protein is Superoxide-generating NADPH oxidase light chain subunit (cybA) of Dictyostelium discoideum (Social amoeba).